Reading from the N-terminus, the 428-residue chain is FAD-dependent monooxygenase kojA (428 aa).

Residues 52–60 and 328–329 contribute to the FAD site; these read RLHKGPHYP and SV.

This sequence belongs to the aromatic-ring hydroxylase family. FAD is required as a cofactor.

Its function is as follows. Probable FAD-dependent monooxygenase; part of the gene cluster that mediates the biosynthesis of 5-hydroxy-2-hydroxymethyl-1,4-pyrone, also know as kojic acid, a by-product in the fermentation process of malting rice that acts as a chelation agent. Glucose might be converted to kojic acid by a combination of dehydrogenase and dehydratase reactions involving kojA and probably additional enzymes. This chain is FAD-dependent monooxygenase kojA, found in Aspergillus flavus (strain ATCC 200026 / FGSC A1120 / IAM 13836 / NRRL 3357 / JCM 12722 / SRRC 167).